We begin with the raw amino-acid sequence, 127 residues long: Ribosome-binding factor A (127 aa).

Belongs to the RbfA family. As to quaternary structure, monomer. Binds 30S ribosomal subunits, but not 50S ribosomal subunits or 70S ribosomes.

Its subcellular location is the cytoplasm. In terms of biological role, one of several proteins that assist in the late maturation steps of the functional core of the 30S ribosomal subunit. Associates with free 30S ribosomal subunits (but not with 30S subunits that are part of 70S ribosomes or polysomes). Required for efficient processing of 16S rRNA. May interact with the 5'-terminal helix region of 16S rRNA. The protein is Ribosome-binding factor A of Glaesserella parasuis serovar 5 (strain SH0165) (Haemophilus parasuis).